We begin with the raw amino-acid sequence, 845 residues long: Beta-mannosidase B (845 aa).

An N-linked (GlcNAc...) asparagine glycan is attached at N252. The active-site Proton donor is the E432. N717 and N723 each carry an N-linked (GlcNAc...) asparagine glycan.

The protein belongs to the glycosyl hydrolase 2 family. Beta-mannosidase B subfamily.

The enzyme catalyses Hydrolysis of terminal, non-reducing beta-D-mannose residues in beta-D-mannosides.. Its pathway is glycan metabolism; N-glycan degradation. In terms of biological role, exoglycosidase that cleaves the single beta-linked mannose residue from the non-reducing end of beta-mannosidic oligosaccharides of various complexity and length. Prefers mannobiose over mannotriose and has no activity against polymeric mannan. Is also severely restricted by galactosyl substitutions at the +1 subsite. The chain is Beta-mannosidase B (mndB) from Aspergillus fumigatus (strain CBS 144.89 / FGSC A1163 / CEA10) (Neosartorya fumigata).